The primary structure comprises 571 residues: E3 ubiquitin-protein ligase ipaH3 (571 aa).

The interaction with target proteins stretch occupies residues 1–260 (MSIMLPINNN…SQQTAQPDYH (260 aa)). LRR repeat units lie at residues 58-81 (INQFSELQLNRLNLSSLPDNLPPQ), 83-99 (TVLEITQNALISLPELP), 100-119 (ASLEYLDACDNRLSTLPELP), 120-144 (ASLKHLDVDNNQLTMLPELPALLEY), 146-159 (NADNNQLTMLPELP), 160-184 (TSLEVLSVRNNQLTFLPELPESLEA), 186-202 (DVSTNLLESLPAVPVRN), 205-229 (SEETEIFFRCRENRITHIPENILSL), and 232-260 (TCTIILEDNPLSSRIRESLSQQTAQPDYH). The tract at residues 269–278 (SDGQQNTLHR) is linker. An NEL domain is found at 279 to 571 (PLADAVTAWF…SENGSQLHHS (293 aa)). Positions 279-571 (PLADAVTAWF…SENGSQLHHS (293 aa)) are E3 ubiquitin-protein ligase catalytic domain. Residue Cys363 is the Glycyl thioester intermediate of the active site.

The protein belongs to the LRR-containing bacterial E3 ligase family. Post-translationally, ubiquitinated in the presence of host E1 ubiquitin-activating enzyme, E2 ubiquitin-conjugating enzyme UBE2D3 and ubiquitin.

The protein localises to the secreted. It is found in the host cytoplasm. The enzyme catalyses S-ubiquitinyl-[E2 ubiquitin-conjugating enzyme]-L-cysteine + [acceptor protein]-L-lysine = [E2 ubiquitin-conjugating enzyme]-L-cysteine + N(6)-ubiquitinyl-[acceptor protein]-L-lysine.. Functionally, effector proteins function to alter host cell physiology and promote bacterial survival in host tissues. This protein is an E3 ubiquitin ligase that interferes with host's ubiquitination pathway. Synthesizes a 'Lys-48'-linked ubiquitin chain, which requires non-covalent binding between ubiquitin and the host ubiquitin-conjugating enzyme UBE2D1. This is E3 ubiquitin-protein ligase ipaH3 (ipaH3) from Shigella flexneri.